The primary structure comprises 157 residues: DNA gyrase inhibitor 2 (157 aa).

It belongs to the DNA gyrase inhibitor family. In terms of assembly, interacts with DNA gyrase.

It is found in the cytoplasm. Functionally, inhibits the supercoiling activity of DNA gyrase. Acts by inhibiting DNA gyrase at an early step, prior to (or at the step of) binding of DNA by the gyrase. It protects cells against toxins that target DNA gyrase, by inhibiting activity of these toxins and reducing the formation of lethal double-strand breaks in the cell. In Dickeya dadantii (strain 3937) (Erwinia chrysanthemi (strain 3937)), this protein is DNA gyrase inhibitor 2.